The following is a 249-amino-acid chain: Putative TrmH family tRNA/rRNA methyltransferase (249 aa).

S-adenosyl-L-methionine contacts are provided by Gly-196, Ile-216, and Leu-225.

It belongs to the class IV-like SAM-binding methyltransferase superfamily. RNA methyltransferase TrmH family.

The sequence is that of Putative TrmH family tRNA/rRNA methyltransferase from Staphylococcus epidermidis (strain ATCC 35984 / DSM 28319 / BCRC 17069 / CCUG 31568 / BM 3577 / RP62A).